Here is a 431-residue protein sequence, read N- to C-terminus: Enolase (431 aa).

Position 167 (Q167) interacts with (2R)-2-phosphoglycerate. E209 (proton donor) is an active-site residue. D246, E290, and D317 together coordinate Mg(2+). K342, R371, S372, and K393 together coordinate (2R)-2-phosphoglycerate. K342 functions as the Proton acceptor in the catalytic mechanism.

It belongs to the enolase family. As to quaternary structure, component of the RNA degradosome, a multiprotein complex involved in RNA processing and mRNA degradation. Mg(2+) is required as a cofactor.

It localises to the cytoplasm. Its subcellular location is the secreted. The protein localises to the cell surface. The enzyme catalyses (2R)-2-phosphoglycerate = phosphoenolpyruvate + H2O. It participates in carbohydrate degradation; glycolysis; pyruvate from D-glyceraldehyde 3-phosphate: step 4/5. Catalyzes the reversible conversion of 2-phosphoglycerate (2-PG) into phosphoenolpyruvate (PEP). It is essential for the degradation of carbohydrates via glycolysis. In Yersinia enterocolitica serotype O:8 / biotype 1B (strain NCTC 13174 / 8081), this protein is Enolase.